A 188-amino-acid polypeptide reads, in one-letter code: Pyridoxal 5'-phosphate synthase subunit PdxT (188 aa).

Position 47–49 (47–49) interacts with L-glutamine; sequence GES. The active-site Nucleophile is the C79. Residues R106 and 134–135 each bind L-glutamine; that span reads IR. Active-site charge relay system residues include H169 and E171.

It belongs to the glutaminase PdxT/SNO family. In terms of assembly, in the presence of PdxS, forms a dodecamer of heterodimers. Only shows activity in the heterodimer.

The enzyme catalyses aldehydo-D-ribose 5-phosphate + D-glyceraldehyde 3-phosphate + L-glutamine = pyridoxal 5'-phosphate + L-glutamate + phosphate + 3 H2O + H(+). It carries out the reaction L-glutamine + H2O = L-glutamate + NH4(+). It functions in the pathway cofactor biosynthesis; pyridoxal 5'-phosphate biosynthesis. Its function is as follows. Catalyzes the hydrolysis of glutamine to glutamate and ammonia as part of the biosynthesis of pyridoxal 5'-phosphate. The resulting ammonia molecule is channeled to the active site of PdxS. This chain is Pyridoxal 5'-phosphate synthase subunit PdxT, found in Caldicellulosiruptor bescii (strain ATCC BAA-1888 / DSM 6725 / KCTC 15123 / Z-1320) (Anaerocellum thermophilum).